Consider the following 279-residue polypeptide: MTQAYDGFVHLGFSNRNGRTISHKKYQEGNSRVSADNSDANGVPYYFLINMGGGFVEGEQYQVTIDVNKDAHALVTTQTPTYVYKCEKGQLTHQNTSITLEENSYLEYMADEVIPYLRSRYFQTSRIDMDKSAHLIYSDGVTAGWSHEDLPFQYHYFRNLTQIYQDDELVYSDQTLLEPQKQDMFKLGYFEGWRNYNSLVMVSPNIDEAFVKALQKHLENLNLESDFAISSLDIPGLVLRILGKTAEDNRRVIYSCADYFRQEIHGLTPLNLRKNDMRR.

This sequence belongs to the UreD family. UreD, UreF and UreG form a complex that acts as a GTP-hydrolysis-dependent molecular chaperone, activating the urease apoprotein by helping to assemble the nickel containing metallocenter of UreC. The UreE protein probably delivers the nickel.

It localises to the cytoplasm. Its function is as follows. Required for maturation of urease via the functional incorporation of the urease nickel metallocenter. The chain is Urease accessory protein UreD from Streptococcus salivarius (strain 57.I).